The following is a 133-amino-acid chain: Small ribosomal subunit protein uS8 (133 aa).

Belongs to the universal ribosomal protein uS8 family. As to quaternary structure, part of the 30S ribosomal subunit. Contacts proteins S5 and S12.

Its function is as follows. One of the primary rRNA binding proteins, it binds directly to 16S rRNA central domain where it helps coordinate assembly of the platform of the 30S subunit. This Protochlamydia amoebophila (strain UWE25) protein is Small ribosomal subunit protein uS8.